Here is a 293-residue protein sequence, read N- to C-terminus: Ribosomal protein L11 methyltransferase (293 aa).

Thr144, Gly165, Asp187, and Asn228 together coordinate S-adenosyl-L-methionine.

Belongs to the methyltransferase superfamily. PrmA family.

The protein localises to the cytoplasm. The enzyme catalyses L-lysyl-[protein] + 3 S-adenosyl-L-methionine = N(6),N(6),N(6)-trimethyl-L-lysyl-[protein] + 3 S-adenosyl-L-homocysteine + 3 H(+). Functionally, methylates ribosomal protein L11. The sequence is that of Ribosomal protein L11 methyltransferase from Methylococcus capsulatus (strain ATCC 33009 / NCIMB 11132 / Bath).